We begin with the raw amino-acid sequence, 132 residues long: S-protein homolog 8 (132 aa).

An N-terminal signal peptide occupies residues 1-20 (MHSLSWFLLVIGLSVGLSSG).

This sequence belongs to the plant self-incompatibility (S1) protein family. In terms of tissue distribution, mostly expressed in seedlings, stems, leaves and floral tissues, and, to a lower extent, in roots.

Its subcellular location is the secreted. This chain is S-protein homolog 8, found in Arabidopsis thaliana (Mouse-ear cress).